Here is a 215-residue protein sequence, read N- to C-terminus: UPF0502 protein PP_2442 (215 aa).

This sequence belongs to the UPF0502 family.

The sequence is that of UPF0502 protein PP_2442 from Pseudomonas putida (strain ATCC 47054 / DSM 6125 / CFBP 8728 / NCIMB 11950 / KT2440).